A 594-amino-acid polypeptide reads, in one-letter code: UvrABC system protein C (594 aa).

Positions 13–99 (NSSGVYQYFD…IKQLKPKYNI (87 aa)) constitute a GIY-YIG domain. The UVR domain occupies 205 to 240 (DRLIKELELKMERLSNNLRFEEALIYRDRIAKIQKI).

This sequence belongs to the UvrC family. As to quaternary structure, interacts with UvrB in an incision complex.

It is found in the cytoplasm. The UvrABC repair system catalyzes the recognition and processing of DNA lesions. UvrC both incises the 5' and 3' sides of the lesion. The N-terminal half is responsible for the 3' incision and the C-terminal half is responsible for the 5' incision. This Helicobacter pylori (strain ATCC 700392 / 26695) (Campylobacter pylori) protein is UvrABC system protein C.